Reading from the N-terminus, the 355-residue chain is Peptide chain release factor 1 (355 aa).

Q231 carries the N5-methylglutamine modification. The segment covering 283-292 (IAKETSERKS) has biased composition (basic and acidic residues). The disordered stretch occupies residues 283–303 (IAKETSERKSQVGTGDRSGRI).

Belongs to the prokaryotic/mitochondrial release factor family. Post-translationally, methylated by PrmC. Methylation increases the termination efficiency of RF1.

It localises to the cytoplasm. Peptide chain release factor 1 directs the termination of translation in response to the peptide chain termination codons UAG and UAA. This chain is Peptide chain release factor 1, found in Campylobacter curvus (strain 525.92).